Here is a 360-residue protein sequence, read N- to C-terminus: MTDLDTLERDLLAQVGAASDEAALDAVRVAALGKKGSVSDLLKTLGSMTPEERKERGPLINGLRDRVQGAVTARKTELAEAALEARLASERVDVTLPVREAPEVRGRIHPISQVIDEITAIFADMGFAVAEGPDIETDELNFTALNFPPGHPAREMHDTFFLAPDRDGKRKVLRTHTSPVQVRTMRAQTPPIRVIIPGRTYRHDSDQTHTPMFHQVEGLVIDTSANIANLKWVLEEFCKAFFEVDGVKMRFRPSFFPFTEPSAEVDIQCSRKGGEIRFGEGDDWLEILGCGMVHPNVLRNCGLDPDAVQGFAFGVGIDRIAMLKYGMPDLRPFFEADVRWLDHYGFRPLDVPSLVGGLTA.

Glu-260 contributes to the Mg(2+) binding site.

This sequence belongs to the class-II aminoacyl-tRNA synthetase family. Phe-tRNA synthetase alpha subunit type 1 subfamily. As to quaternary structure, tetramer of two alpha and two beta subunits. Mg(2+) is required as a cofactor.

It localises to the cytoplasm. The catalysed reaction is tRNA(Phe) + L-phenylalanine + ATP = L-phenylalanyl-tRNA(Phe) + AMP + diphosphate + H(+). This Methylobacterium radiotolerans (strain ATCC 27329 / DSM 1819 / JCM 2831 / NBRC 15690 / NCIMB 10815 / 0-1) protein is Phenylalanine--tRNA ligase alpha subunit.